A 228-amino-acid polypeptide reads, in one-letter code: Ribonuclease 3 (228 aa).

Positions 2 to 130 constitute an RNase III domain; it reads LTYLEQKINY…LLAAVYLDGG (129 aa). Glutamate 43 serves as a coordination point for Mg(2+). Aspartate 47 is a catalytic residue. 2 residues coordinate Mg(2+): aspartate 116 and glutamate 119. Glutamate 119 is a catalytic residue. The region spanning 157 to 226 is the DRBM domain; sequence DYKTRLQEVV…AMEALSKLGI (70 aa).

This sequence belongs to the ribonuclease III family. In terms of assembly, homodimer. Mg(2+) serves as cofactor.

Its subcellular location is the cytoplasm. It carries out the reaction Endonucleolytic cleavage to 5'-phosphomonoester.. Its function is as follows. Digests double-stranded RNA. Involved in the processing of primary rRNA transcript to yield the immediate precursors to the large and small rRNAs (23S and 16S). Processes some mRNAs, and tRNAs when they are encoded in the rRNA operon. Processes pre-crRNA and tracrRNA of type II CRISPR loci if present in the organism. In Caldanaerobacter subterraneus subsp. tengcongensis (strain DSM 15242 / JCM 11007 / NBRC 100824 / MB4) (Thermoanaerobacter tengcongensis), this protein is Ribonuclease 3.